Consider the following 109-residue polypeptide: MSSKQQLACTYAALILADSGKTDMDSLLKVTKAAGVDVSKGMASAFASILKNVDINDVLSKVSFGGVAPAAGGATAAPAAAAAAAAPAAAAAKKEEEEEDDDMGFGLFD.

The interval 90–109 (AAAKKEEEEEDDDMGFGLFD) is disordered.

Belongs to the eukaryotic ribosomal protein P1/P2 family. As to quaternary structure, P1 and P2 exist as dimers at the large ribosomal subunit.

In terms of biological role, plays an important role in the elongation step of protein synthesis. This is Large ribosomal subunit protein P1 from Trypanosoma cruzi.